The sequence spans 300 residues: 4-hydroxy-tetrahydrodipicolinate synthase (300 aa).

Residue Thr-46 coordinates pyruvate. Tyr-134 acts as the Proton donor/acceptor in catalysis. Residue Lys-162 is the Schiff-base intermediate with substrate of the active site. Ile-207 contributes to the pyruvate binding site.

It belongs to the DapA family. In terms of assembly, homotetramer; dimer of dimers.

The protein localises to the cytoplasm. It catalyses the reaction L-aspartate 4-semialdehyde + pyruvate = (2S,4S)-4-hydroxy-2,3,4,5-tetrahydrodipicolinate + H2O + H(+). It participates in amino-acid biosynthesis; L-lysine biosynthesis via DAP pathway; (S)-tetrahydrodipicolinate from L-aspartate: step 3/4. Functionally, catalyzes the condensation of (S)-aspartate-beta-semialdehyde [(S)-ASA] and pyruvate to 4-hydroxy-tetrahydrodipicolinate (HTPA). The sequence is that of 4-hydroxy-tetrahydrodipicolinate synthase from Protochlamydia amoebophila (strain UWE25).